A 644-amino-acid polypeptide reads, in one-letter code: Zinc finger protein 74 (644 aa).

Residues 43–114 (VSFKDVAVDF…QREVPRGPCP (72 aa)) enclose the KRAB domain. 12 C2H2-type zinc fingers span residues 248–270 (FVCG…RRWH), 276–298 (YKCD…RRIH), 304–326 (FFCG…QRIH), 332–354 (YKCS…LRVH), 360–382 (YRCG…HRIH), 388–410 (YQCG…EKIH), 416–438 (FKCS…QRTH), 444–466 (FKCA…RRIH), 472–494 (FKCN…RRIH), 500–522 (FDCS…QRIH), 528–550 (YKCS…QKIH), and 556–578 (FKCE…QRLH). A Glycyl lysine isopeptide (Lys-Gly) (interchain with G-Cter in SUMO2) cross-link involves residue K582.

It belongs to the krueppel C2H2-type zinc-finger protein family. In terms of tissue distribution, highly expressed in the fetal brain.

The protein localises to the nucleus. May play a role in RNA metabolism. This is Zinc finger protein 74 (ZNF74) from Homo sapiens (Human).